Consider the following 159-residue polypeptide: 6,7-dimethyl-8-ribityllumazine synthase (159 aa).

5-amino-6-(D-ribitylamino)uracil contacts are provided by residues phenylalanine 22, 56 to 58 (AFE), and 80 to 82 (AVI). 85 to 86 (AT) serves as a coordination point for (2S)-2-hydroxy-3-oxobutyl phosphate. Histidine 88 acts as the Proton donor in catalysis. Phenylalanine 113 contacts 5-amino-6-(D-ribitylamino)uracil. Arginine 127 provides a ligand contact to (2S)-2-hydroxy-3-oxobutyl phosphate.

It belongs to the DMRL synthase family.

It catalyses the reaction (2S)-2-hydroxy-3-oxobutyl phosphate + 5-amino-6-(D-ribitylamino)uracil = 6,7-dimethyl-8-(1-D-ribityl)lumazine + phosphate + 2 H2O + H(+). The protein operates within cofactor biosynthesis; riboflavin biosynthesis; riboflavin from 2-hydroxy-3-oxobutyl phosphate and 5-amino-6-(D-ribitylamino)uracil: step 1/2. Functionally, catalyzes the formation of 6,7-dimethyl-8-ribityllumazine by condensation of 5-amino-6-(D-ribitylamino)uracil with 3,4-dihydroxy-2-butanone 4-phosphate. This is the penultimate step in the biosynthesis of riboflavin. This Lactiplantibacillus plantarum (strain ATCC BAA-793 / NCIMB 8826 / WCFS1) (Lactobacillus plantarum) protein is 6,7-dimethyl-8-ribityllumazine synthase.